Consider the following 100-residue polypeptide: Small ribosomal subunit protein uS14c (100 aa).

It belongs to the universal ribosomal protein uS14 family. As to quaternary structure, part of the 30S ribosomal subunit.

It localises to the plastid. It is found in the chloroplast. In terms of biological role, binds 16S rRNA, required for the assembly of 30S particles. The sequence is that of Small ribosomal subunit protein uS14c from Chlorokybus atmophyticus (Soil alga).